A 770-amino-acid chain; its full sequence is Amyloid-beta precursor protein (770 aa).

An N-terminal signal peptide occupies residues 1–17 (MLPSLALLLLAAWTVRA). The Extracellular portion of the chain corresponds to 18–701 (LEVPTDGNAG…AEDVGSNKGA (684 aa)). The GFLD subdomain stretch occupies residues 28 to 123 (LLAEPQIAMF…PYRCLVGEFV (96 aa)). In terms of domain architecture, E1 spans 28–189 (LLAEPQIAMF…RGVEFVCCPL (162 aa)). Cystine bridges form between Cys-38-Cys-62, Cys-73-Cys-117, Cys-98-Cys-105, Cys-133-Cys-187, Cys-144-Cys-174, and Cys-158-Cys-186. 96-110 (NWCKRGRKQCKTHTH) contributes to the heparin binding site. The tract at residues 131-189 (DKCKFLHQERMDVCETHLHWHTVAKETCSEKSTNLHDYGMLLPCGIDKFRGVEFVCCPL) is cuBD subdomain. 3 residues coordinate Cu(2+): His-147, His-151, and Tyr-168. The interval 181–188 (GVEFVCCP) is zinc-binding. Residues Glu-183, Cys-186, and Cys-187 each contribute to the Zn(2+) site. Residues 193 to 207 (SDSVDSADAEEDDSD) show a composition bias toward acidic residues. Residues 193–284 (SDSVDSADAE…TTTTTTESVE (92 aa)) are disordered. A Phosphoserine; by CK2 modification is found at Ser-198. Ser-206 is modified (phosphoserine; by CK1). Residues Tyr-217 and Tyr-262 each carry the sulfotyrosine modification. Acidic residues predominate over residues 228–264 (VAEEEEVADVEEEEADDDEDVEDGDEVEEEAEEPYEE). Residues 268-281 (RTTSTATTTTTTTE) are compositionally biased toward low complexity. Cystine bridges form between Cys-291–Cys-341, Cys-300–Cys-324, and Cys-316–Cys-337. A BPTI/Kunitz inhibitor domain is found at 291–341 (CSEQAETGPCRAMISRWYFDVTEGKCVPFFYGGCGGNRNNFDTEEYCMAVC). At Tyr-336 the chain carries Sulfotyrosine. Positions 344-365 (VSTQSLLKTTSEPLPQDPDKLP) match the OX-2 motif. The region spanning 374-565 (AVDKYLETPG…EEIQDEVDEL (192 aa)) is the E2 domain. Positions 391–423 (FQKAKERLEAKHRERMSQVMREWEEAERQAKNL) are heparin-binding. The residue at position 441 (Ser-441) is a Phosphoserine. The interval 491-522 (FNMLKKYVRAEQKDRQHTLKHFEHVRMVDPKK) is heparin-binding. Tyr-497 carries the post-translational modification Phosphotyrosine. The interval 523–540 (AAQIRSQVMTHLRVIYER) is collagen-binding. Asn-542 and Asn-571 each carry an N-linked (GlcNAc...) asparagine glycan. Residues His-677 and His-685 each contribute to the Cu(2+) site. Zn(2+) contacts are provided by His-677 and His-685. The segment at 695 to 722 (VGSNKGAIIGLMVGGVVIATVIVITLVM) is interaction with PSEN1. Residues 702-722 (IIGLMVGGVVIATVIVITLVM) traverse the membrane as a helical segment. At 723 to 770 (LKKKQYTSIHHGVVEVDAAVTPEERHLSKMQQNGYENPTYKFFEQMQN) the chain is on the cytoplasmic side. The Basolateral sorting signal motif lies at 724–734 (KKKQYTSIHHG). Thr-729 is modified (phosphothreonine). Phosphoserine; by APP-kinase I is present on Ser-730. The interval 732–751 (HHGVVEVDAAVTPEERHLSK) is interaction with G(o)-alpha. Residue Thr-743 is modified to Phosphothreonine; by CDK5 and MAPK10 and LRRK2. The tract at residues 756–770 (GYENPTYKFFEQMQN) is interaction with DAB2. The segment at 756-770 (GYENPTYKFFEQMQN) is required for the interaction with KIF5B and for anterograde transport in axons. Phosphotyrosine; by ABL1 is present on Tyr-757. Positions 757-762 (YENPTY) match the YENPXY motif; contains endocytosis signal motif. A Glycyl lysine isopeptide (Lys-Gly) (interchain with G-Cter in ubiquitin) cross-link involves residue Lys-763.

Belongs to the APP family. Binds, via its C-terminus, to the PID domain of several cytoplasmic proteins, including APBB family members, the APBA family, MAPK8IP1, SHC1, NUMB and DAB1. Binding to DAB1 inhibits its serine phosphorylation. Interacts (via NPXY motif) with DAB2 (via PID domain); the interaction is impaired by tyrosine phosphorylation of the NPXY motif. Also interacts with GPCR-like protein BPP, APPBP1, IB1, KNS2 (via its TPR domains), APPBP2 (via BaSS) and DDB1. In vitro, it binds MAPT via the MT-binding domains. Associates with microtubules in the presence of ATP and in a kinesin-dependent manner. Interacts, through a C-terminal domain, with GNAO1. Amyloid-beta protein 42 binds CHRNA7 in hippocampal neurons. Amyloid-beta associates with HADH2. Interacts with ANKS1B and AGER. Interacts with CPEB1. Interacts with ITM2B. Interacts with ITM2C. Interacts with IDE. Can form homodimers; dimerization is enhanced in the presence of Cu(2+) ions. Can form homodimers; this is promoted by heparin binding. Amyloid-beta protein 40 interacts with S100A9. CTF-alpha product of APP interacts with GSAP. Isoform APP695 interacts with SORL1 (via N-terminal ectodomain); this interaction retains APP in the trans-Golgi network and reduces processing into soluble APP-alpha and amyloid-beta peptides. The C99 fragment also interacts with SORL1. Isoform APP751 interacts with SORL1. Isoform APP770 interacts with SORL1. Interacts with PLD3. Interacts with VDAC1. Interacts with NSG1; could regulate APP processing. Amyloid-beta protein 42 interacts with FPR2. Interacts with SYT7. Interacts (via transmembrane region) with PSEN1; the interaction is direct. Interacts with LRRK2. Interacts (via cytoplasmic domain) with KIF5B. Interacts (via C-terminus) with APBB2/FE65L1 (via C-terminus). Interacts (via intracellular domain) with APBB3. In terms of processing, proteolytically processed under normal cellular conditions. Cleavage either by alpha-secretase, beta-secretase or theta-secretase leads to generation and extracellular release of soluble APP peptides, S-APP-alpha and S-APP-beta, and the retention of corresponding membrane-anchored C-terminal fragments, C80, C83 and C99. Subsequent processing of C80 and C83 by gamma-secretase yields P3 peptides. This is the major secretory pathway and is non-amyloidogenic. Alternatively, presenilin/nicastrin-mediated gamma-secretase processing of C99 releases the amyloid-beta proteins, amyloid-beta protein 40 and amyloid-beta protein 42, major components of amyloid plaques, and the cytotoxic C-terminal fragments, gamma-CTF(50), gamma-CTF(57) and gamma-CTF(59). PSEN1 cleavage is more efficient with C83 than with C99 as substrate (in vitro). Amyloid-beta protein 40 and Amyloid-beta protein 42 are cleaved by ACE. Many other minor amyloid-beta peptides, amyloid-beta 1-X peptides, are found in cerebral spinal fluid (CSF) including the amyloid-beta X-15 peptides, produced from the cleavage by alpha-secretase. Post-translationally, proteolytically cleaved by caspases during neuronal apoptosis. Cleavage at Asp-739 by either CASP6, CASP8 or CASP9 results in the production of the neurotoxic C31 peptide and the increased production of amyloid-beta peptides. N- and O-glycosylated. In terms of processing, phosphorylation in the C-terminal on tyrosine, threonine and serine residues is neuron-specific. Phosphorylation can affect APP processing, neuronal differentiation and interaction with other proteins. Phosphorylated on Thr-743 in neuronal cells by Cdc5 kinase and Mapk10, in dividing cells by Cdc2 kinase in a cell-cycle dependent manner with maximal levels at the G2/M phase and, in vitro, by GSK-3-beta. The Thr-743 phosphorylated form causes a conformational change which reduces binding of Fe65 family members. In dopaminergic (DA) neurons, phosphorylation on Thr-743 by LRKK2 promotes the production and the nuclear translocation of the APP intracellular domain (AICD) which induces DA neuron apoptosis. Phosphorylation on Tyr-757 is required for SHC binding. Phosphorylated in the extracellular domain by casein kinases on both soluble and membrane-bound APP. This phosphorylation is inhibited by heparin. Post-translationally, extracellular binding and reduction of copper, results in a corresponding oxidation of Cys-144 and Cys-158, and the formation of a disulfide bond. Trophic-factor deprivation triggers the cleavage of surface APP by beta-secretase to release sAPP-beta which is further cleaved to release an N-terminal fragment of APP (N-APP). In terms of processing, amyloid-beta peptides are degraded by IDE. Post-translationally, sulfated on tyrosine residues. In terms of tissue distribution, expressed in the brain with expression in cortex, cerebellum, hippocampus, olfactory bulb, neurons, astrocytes and microglia (at protein level). Expressed in the retinal lens. Expressed at a low level in muscle cells (at protein level). As to expression, expressed in kidney. Widely expressed. Expressed in several different brain regions including hippocampus, substantia nigra pars compacta and cerebellum. Within the cerebellum, abundantly expressed in Purkinje cells. In terms of tissue distribution, expressed in the brain, kidney and liver. Expressed in several different brain regions including hippocampus, substantia nigra pars compacta and cerebellum. Within the cerebellum, abundantly expressed in Purkinje cells. As to expression, expressed in several different brain regions including hippocampus, substantia nigra pars compacta and cerebellum. Within the cerebellum, abundantly expressed in Purkinje cells.

Its subcellular location is the cell membrane. It localises to the membrane. The protein resides in the perikaryon. The protein localises to the cell projection. It is found in the growth cone. Its subcellular location is the clathrin-coated pit. It localises to the early endosome. The protein resides in the cytoplasmic vesicle. The protein localises to the golgi apparatus. It is found in the trans-Golgi network. Its subcellular location is the endoplasmic reticulum. It localises to the secreted. The protein resides in the cell surface. The protein localises to the nucleus. It is found in the cytoplasm. Functionally, functions as a cell surface receptor and performs physiological functions on the surface of neurons relevant to neurite growth, neuronal adhesion and axonogenesis. Interaction between APP molecules on neighboring cells promotes synaptogenesis. Involved in cell mobility and transcription regulation through protein-protein interactions. Can promote transcription activation through binding to APBB1-KAT5 and inhibit Notch signaling through interaction with Numb. Couples to apoptosis-inducing pathways such as those mediated by G(o) and JIP. Inhibits G(o)-alpha ATPase activity. Acts as a kinesin I membrane receptor, mediating the axonal transport of beta-secretase and presenilin 1. By acting as a kinesin I membrane receptor, plays a role in axonal anterograde transport of cargo towards synapses in axons. May be involved in copper homeostasis/oxidative stress through copper ion reduction. Can regulate neurite outgrowth through binding to components of the extracellular matrix such as heparin and collagen I and IV. The splice isoforms that contain the BPTI domain possess protease inhibitor activity. Induces a AGER-dependent pathway that involves activation of p38 MAPK, resulting in internalization of amyloid-beta peptide and leading to mitochondrial dysfunction in cultured cortical neurons. Provides Cu(2+) ions for GPC1 which are required for release of nitric oxide (NO) and subsequent degradation of the heparan sulfate chains on GPC1. In terms of biological role, amyloid-beta peptides are lipophilic metal chelators with metal-reducing activity. Binds transient metals such as copper, zinc and iron. Rat and mouse amyloid-beta peptides bind only weakly transient metals and have little reducing activity due to substitutions of transient metal chelating residues. Amyloid-beta protein 42 may activate mononuclear phagocytes in the brain and elicit inflammatory responses. Promotes both tau aggregation and TPK II-mediated phosphorylation. Also binds GPC1 in lipid rafts. The gamma-CTF peptides as well as the caspase-cleaved peptides, including C31, are potent enhancers of neuronal apoptosis. The protein is Amyloid-beta precursor protein of Mus musculus (Mouse).